Here is a 212-residue protein sequence, read N- to C-terminus: 2-phospho-L-lactate guanylyltransferase (212 aa).

This sequence belongs to the CofC family. In terms of assembly, homodimer.

It carries out the reaction (2S)-2-phospholactate + GTP + H(+) = (2S)-lactyl-2-diphospho-5'-guanosine + diphosphate. Its pathway is cofactor biosynthesis; coenzyme F420 biosynthesis. Its function is as follows. Guanylyltransferase that catalyzes the activation of (2S)-2-phospholactate (2-PL) as (2S)-lactyl-2-diphospho-5'-guanosine, via the condensation of 2-PL with GTP. It is involved in the biosynthesis of coenzyme F420, a hydride carrier cofactor. In Methanocorpusculum labreanum (strain ATCC 43576 / DSM 4855 / Z), this protein is 2-phospho-L-lactate guanylyltransferase.